Consider the following 132-residue polypeptide: Small ribosomal subunit protein uS8c (132 aa).

The protein belongs to the universal ribosomal protein uS8 family. As to quaternary structure, part of the 30S ribosomal subunit.

The protein resides in the plastid. The protein localises to the chloroplast. One of the primary rRNA binding proteins, it binds directly to 16S rRNA central domain where it helps coordinate assembly of the platform of the 30S subunit. The chain is Small ribosomal subunit protein uS8c (rps8) from Psilotum nudum (Whisk fern).